We begin with the raw amino-acid sequence, 933 residues long: MQNSALKAWLDSSYLSGANQSWIEQLYEDFLTDPDSVDANWRSTFQQLPGTGVKPDQFHSQTREYFRRLAKDASRYSSTISDPDTNVKQVKVLQLINAYRFRGHQHANLDPLGLWQQDKVADLDPSFHDLTEADFQETFNVGSFASGKETMKLGELLEALKQTYCGPIGAEYMHITSTEEKRWIQQRIESGRATFNSEEKKRFLSELTAAEGLERYLGAKFPGAKRFSLEGGDALIPMLKEMIRHAGNSGTREVVLGMAHRGRLNVLVNVLGKKPQDLFDEFAGKHKEHLGTGDVKYHMGFSSDFQTDGGLVHLALAFNPSHLEIVSPVVIGSVRARLDRLDEPSSNKVLPITIHGDAAVTGQGVVQETLNMSKARGYEVGGTVRIVINNQVGFTTSNPLDARSTPYCTDIGKMVQAPIFHVNADDPEAVAFVTRLALDFRNTFKRDVFIDLVCYRRHGHNEADEPSATQPLMYQKIKKHPTPRKIYADKLEQEKVATLEDATEMVNLYRDALDAGDCVVAEWRPMNMHSFTWSPYLNHEWDEEYPNKVEMKRLQELAKRISTVPEAVEMQSRVAKIYGDRQAMAAGEKLFDWGGAENLAYATLVDEGIPVRLSGEDSGRGTFFHRHAVIHNQSNGSTYTPLQHIHNGQGAFRVWDSVLSEEAVLAFEYGYATAEPRTLTIWEAQFGDFANGAQVVIDQFISSGEQKWGRMCGLVMLLPHGYEGQGPEHSSARLERYLQLCAEQNMQVCVPSTPAQVYHMLRRQALRGMRRPLVVMSPKSLLRHPLAVSSLEELANGTFLPAIGEIDELDPKGVKRVVMCSGKVYYDLLEQRRKNNQHDVAIVRIEQLYPFPHKAMQEVLQQFAHVKDFVWCQEEPLNQGAWYCSQHHFREVIPFGASLRYAGRPASASPAVGYMSVHQKQQQDLVNDALNVE.

The protein belongs to the alpha-ketoglutarate dehydrogenase family. As to quaternary structure, homodimer. Part of the 2-oxoglutarate dehydrogenase (OGDH) complex composed of E1 (2-oxoglutarate dehydrogenase), E2 (dihydrolipoamide succinyltransferase) and E3 (dihydrolipoamide dehydrogenase); the complex contains multiple copies of the three enzymatic components (E1, E2 and E3). Interacts (via N-terminus) with SucB, the E2 component of OGDH complex. Thiamine diphosphate is required as a cofactor.

The catalysed reaction is N(6)-[(R)-lipoyl]-L-lysyl-[protein] + 2-oxoglutarate + H(+) = N(6)-[(R)-S(8)-succinyldihydrolipoyl]-L-lysyl-[protein] + CO2. E1 component of the 2-oxoglutarate dehydrogenase (OGDH) complex which catalyzes the decarboxylation of 2-oxoglutarate, the first step in the conversion of 2-oxoglutarate to succinyl-CoA and CO(2). This chain is 2-oxoglutarate dehydrogenase E1 component (sucA), found in Escherichia coli O157:H7.